Here is a 146-residue protein sequence, read N- to C-terminus: Large ribosomal subunit protein uL15 (146 aa).

Positions 1-13 (MKLHELYPAEGSR) are enriched in basic and acidic residues. Residues 1–55 (MKLHELYPAEGSRKVRNRVGRGAATGNGKTSGRGQKGQKARSGGKVRPGFEGGQL) are disordered. A compositionally biased stretch (gly residues) spans 23–35 (AATGNGKTSGRGQ).

It belongs to the universal ribosomal protein uL15 family. Part of the 50S ribosomal subunit.

Its function is as follows. Binds to the 23S rRNA. This chain is Large ribosomal subunit protein uL15, found in Staphylococcus carnosus (strain TM300).